The chain runs to 372 residues: Lipoyl synthase, mitochondrial (372 aa).

Residues M1–E27 constitute a mitochondrion transit peptide. Positions 106, 111, 117, 137, 141, 144, and 352 each coordinate [4Fe-4S] cluster. The 220-residue stretch at E122–H341 folds into the Radical SAM core domain.

Belongs to the radical SAM superfamily. Lipoyl synthase family. The cofactor is [4Fe-4S] cluster.

It is found in the mitochondrion. It catalyses the reaction [[Fe-S] cluster scaffold protein carrying a second [4Fe-4S](2+) cluster] + N(6)-octanoyl-L-lysyl-[protein] + 2 oxidized [2Fe-2S]-[ferredoxin] + 2 S-adenosyl-L-methionine + 4 H(+) = [[Fe-S] cluster scaffold protein] + N(6)-[(R)-dihydrolipoyl]-L-lysyl-[protein] + 4 Fe(3+) + 2 hydrogen sulfide + 2 5'-deoxyadenosine + 2 L-methionine + 2 reduced [2Fe-2S]-[ferredoxin]. It participates in protein modification; protein lipoylation via endogenous pathway; protein N(6)-(lipoyl)lysine from octanoyl-[acyl-carrier-protein]: step 2/2. Functionally, catalyzes the radical-mediated insertion of two sulfur atoms into the C-6 and C-8 positions of the octanoyl moiety bound to the lipoyl domains of lipoate-dependent enzymes, thereby converting the octanoylated domains into lipoylated derivatives. In Bos taurus (Bovine), this protein is Lipoyl synthase, mitochondrial.